The chain runs to 136 residues: uncharacterized protein (136 aa).

Transmembrane regions (helical) follow at residues 25 to 47 (ILKA…PHAF) and 78 to 97 (ITGA…LLTA).

It localises to the cell membrane. This is an uncharacterized protein from Bacillus subtilis (strain 168).